A 222-amino-acid chain; its full sequence is Protein-L-isoaspartate O-methyltransferase (222 aa).

Residue S69 is part of the active site.

The protein belongs to the methyltransferase superfamily. L-isoaspartyl/D-aspartyl protein methyltransferase family.

It is found in the cytoplasm. It carries out the reaction [protein]-L-isoaspartate + S-adenosyl-L-methionine = [protein]-L-isoaspartate alpha-methyl ester + S-adenosyl-L-homocysteine. In terms of biological role, catalyzes the methyl esterification of L-isoaspartyl residues in peptides and proteins that result from spontaneous decomposition of normal L-aspartyl and L-asparaginyl residues. It plays a role in the repair and/or degradation of damaged proteins. The polypeptide is Protein-L-isoaspartate O-methyltransferase (Nitrosomonas eutropha (strain DSM 101675 / C91 / Nm57)).